The sequence spans 999 residues: MKYATGTDNAMTSGISGQTNNSNSASNEMQPTTSTPTAAHKEATSTATTTATYANGNPNSNANPSQSQPSNALFCEQVTTVTNLFEKWNDCERTVVMYALLKRLRYPSLKFLQYSIDSNLTQNLGTSQTNLSSVVIDINANNPVYLQNLLNAYKTFQPCDLLDAMSSSSSDKDSMPCYGSDFQITTSAQCDERKLYARKEDILHEVLNMLPLLKPGNEEAKLIYLTLIPVAVKDTMQQIVPTELVQQIFSYLLIHPAITSEDRRSLNIWLRHLEDHIQAAAAGLTNRSYFLQPSPQLVAGGSSTGSGSCSSSATSSSTASCSSVASSSLCPASGSRSSRTNDWQTIAPPSKQLQNKLAGDWRGNGGGSSSGSINPLCDNLNGITLNELASSQNSLGLSLEGSSSLVNGVVAGAGSMLGIAGGDDHDTSFSKNGTEILDFDPVTADMGEACSLASSSLCGRNGGNPVEDRSQPPPNLQQQLLQPPPYASILMGNVGDQFGEINRWSLDSKIAALKTRRSNSLTTQTISSCSSSSNSSVITVNDNCSNSTENLAQFANKPRSFSLSIEHQRGALMNSGSDTRLDEFKPNYIKFHTRNVGMSGIGLWLKSLRLHKYIELFKNMTYEEMLLITEDFLQSVGVTKGASHKLALCIDKLKERANILNRVEQELLSGQMELSTAVEELTNIVLTPMKPLESPGPPEENIGLRFLKVIDIVTNTLQQDPYAVQDDETLGVLMWILDRSIHNEAFMNHASQLKDLKFKLSKMKISMVPKMHHVKPAGVGPNNGNINKPRWNGKTRKCDTKNGSNDRINNRKNSNDMLNFSLNCLPHPLPHHSQQAPPPLPQFDYNGYGGGPSHQPQYKSSSYPSFMGNPQQQPPPPPSSKSHHHPQQMQQMLQQHNHFPALPQQTPPQSHRRSLNNLILVAGGPQQPQQLIFKPGQGVLTNNGSNDNLVLERNQQSQQQQQQRKLSGGVSSAEQQPKKTMAAVVMENLAKFDQHFTLF.

Over residues 1–36 the composition is skewed to polar residues; that stretch reads MKYATGTDNAMTSGISGQTNNSNSASNEMQPTTSTP. Disordered stretches follow at residues 1 to 69 and 329 to 349; these read MKYA…QSQP and LCPA…IAPP. Composition is skewed to low complexity over residues 44-69 and 329-338; these read TSTA…QSQP and LCPASGSRSS. Serine 564 and serine 575 each carry phosphoserine. The segment at 583 to 763 is interaction with cup; it reads EFKPNYIKFH…KDLKFKLSKM (181 aa). Positions 600 to 654 constitute an SAM domain; that stretch reads GIGLWLKSLRLHKYIELFKNMTYEEMLLITEDFLQSVGVTKGASHKLALCIDKLK. Disordered regions lie at residues 773-892 and 955-977; these read HVKP…MQQM and QQSQ…EQQP. 2 stretches are compositionally biased toward polar residues: residues 801 to 822 and 854 to 864; these read KNGS…NFSL and HQPQYKSSSYP. Serine 972 carries the phosphoserine modification.

The protein belongs to the SMAUG family. In terms of assembly, interacts with oskar (osk). Binds to the 3'-UTR of nanos (nos). Interacts with cup, which in turn recruits eIF4-E, leading to an indirect interaction between smg and eIF4-E that prevents mRNA translation. Forms a complex with aub, twin, AGO3, nanos mRNA and piRNAs that targets the nanos 3'-untranslated region, in early embryos. In terms of tissue distribution, at syncytial blastoderm, it is located throughout the bulk cytoplasm and pole plasm. By the time of cellularization, it concentrates at the posterior pole.

The protein localises to the cytoplasm. Its function is as follows. Translation regulator that binds to the 3'-UTR of specific mRNAs such as nanos (nos) and prevents their translation. Prevents translation of unlocalized nanos in the bulk cytoplasm via the recruitment of cup. This Drosophila melanogaster (Fruit fly) protein is Protein Smaug (smg).